We begin with the raw amino-acid sequence, 178 residues long: Large ribosomal subunit protein uL6 (178 aa).

It belongs to the universal ribosomal protein uL6 family. As to quaternary structure, part of the 50S ribosomal subunit.

In terms of biological role, this protein binds to the 23S rRNA, and is important in its secondary structure. It is located near the subunit interface in the base of the L7/L12 stalk, and near the tRNA binding site of the peptidyltransferase center. The chain is Large ribosomal subunit protein uL6 from Streptococcus gordonii (strain Challis / ATCC 35105 / BCRC 15272 / CH1 / DL1 / V288).